A 348-amino-acid polypeptide reads, in one-letter code: Protein RecA (348 aa).

Residue glycine 67–threonine 74 coordinates ATP.

The protein belongs to the RecA family.

Its subcellular location is the cytoplasm. Can catalyze the hydrolysis of ATP in the presence of single-stranded DNA, the ATP-dependent uptake of single-stranded DNA by duplex DNA, and the ATP-dependent hybridization of homologous single-stranded DNAs. It interacts with LexA causing its activation and leading to its autocatalytic cleavage. This chain is Protein RecA, found in Salinispora tropica (strain ATCC BAA-916 / DSM 44818 / JCM 13857 / NBRC 105044 / CNB-440).